Consider the following 864-residue polypeptide: Xylosyltransferase 2 (864 aa).

The Cytoplasmic portion of the chain corresponds to 1–15; the sequence is MVASARVQKLVRRYK. Residues 16–36 traverse the membrane as a helical; Signal-anchor for type II membrane protein segment; sequence LAIATALAILLLQGLVVWSFS. Residues 37-864 lie on the Lumenal side of the membrane; that stretch reads GLEEDEPGEK…GPVKADGRLR (828 aa). 2 disordered regions span residues 39–123 and 136–158; these read EEDE…RQNL and AGFP…DNSF. Basic and acidic residues predominate over residues 53–65; it reads RPLDPGEGSKDTD. A compositionally biased stretch (basic residues) spans 73 to 82; that stretch reads SAGRRHGRWR. N-linked (GlcNAc...) asparagine glycosylation is present at N122. 4 cysteine pairs are disulfide-bonded: C162–C190, C206–C448, C467–C480, and C469–C478. UDP-alpha-D-xylose is bound by residues V239, D267, and 296–298; that span reads TIW. N327 carries N-linked (GlcNAc...) asparagine glycosylation. Position 400-401 (400-401) interacts with UDP-alpha-D-xylose; that stretch reads DW. UDP-alpha-D-xylose is bound by residues S481 and 504–505; that span reads RK. 2 disulfide bridges follow: C580–C832 and C825–C838. N-linked (GlcNAc...) asparagine glycosylation occurs at N682.

Belongs to the glycosyltransferase 14 family. XylT subfamily. In terms of assembly, monomer. It depends on Mg(2+) as a cofactor. Mn(2+) serves as cofactor. Contains disulfide bonds.

The protein resides in the golgi apparatus membrane. Its subcellular location is the secreted. It catalyses the reaction UDP-alpha-D-xylose + L-seryl-[protein] = 3-O-(beta-D-xylosyl)-L-seryl-[protein] + UDP + H(+). It functions in the pathway glycan metabolism; chondroitin sulfate biosynthesis. It participates in glycan metabolism; heparan sulfate biosynthesis. Functionally, catalyzes the first step in the biosynthesis of chondroitin sulfate, heparan sulfate and dermatan sulfate proteoglycans, such as DCN. Transfers D-xylose from UDP-D-xylose to specific serine residues of the core protein. The polypeptide is Xylosyltransferase 2 (Xylt2) (Rattus norvegicus (Rat)).